A 166-amino-acid chain; its full sequence is Peroxynitrite isomerase Rv2717c (166 aa).

Residues glycine 28–glycine 34 carry the GXWXGXG motif. Heme b-binding residues include threonine 40 and histidine 158.

The protein belongs to the nitrobindin family. Homodimer. Heme b is required as a cofactor.

The protein localises to the cytoplasm. It carries out the reaction peroxynitrite = nitrate. It functions in the pathway nitrogen metabolism. In terms of biological role, heme-binding protein able to scavenge peroxynitrite and to protect free L-tyrosine against peroxynitrite-mediated nitration, by acting as a peroxynitrite isomerase that converts peroxynitrite to nitrate. Therefore, this protein likely plays a role in peroxynitrite sensing and in the detoxification of reactive nitrogen and oxygen species (RNS and ROS, respectively). Is able to bind nitric oxide (NO) in vitro, but may act as a sensor of peroxynitrite levels in vivo. This Arabidopsis thaliana (Mouse-ear cress) protein is Peroxynitrite isomerase Rv2717c.